Here is a 229-residue protein sequence, read N- to C-terminus: MAKKKALIPLLYLASIVFLPWWISLSFTKSLESWVTDWWDTGQSEILLNAIQEKSILKKFIELEELFLLDEMIKEYPETHLEKLRIGIYNETIQLIKMHNEDCIYTILHFSTNIICFVILSSYSILGNEELVILNSWVQEFLYNLSDTIKAFSILLLTDLCIGFHSPHGWELMIGSVYKDFGFAHYEQIISGLVSTFPVILDTILKYWIFRYLNRVSPSLVVIYHSMND.

A run of 4 helical transmembrane segments spans residues 7-27, 114-134, 154-174, and 189-209; these read LIPLLYLASIVFLPWWISLSF, IICFVILSSYSILGNEELVIL, ILLLTDLCIGFHSPHGWELMI, and IISGLVSTFPVILDTILKYWI.

It belongs to the CemA family.

Its subcellular location is the plastid. It localises to the chloroplast inner membrane. It catalyses the reaction K(+)(in) + H(+)(out) = K(+)(out) + H(+)(in). Contributes to K(+)/H(+) antiport activity by supporting proton efflux to control proton extrusion and homeostasis in chloroplasts in a light-dependent manner to modulate photosynthesis. Prevents excessive induction of non-photochemical quenching (NPQ) under continuous-light conditions. Indirectly promotes efficient inorganic carbon uptake into chloroplasts. This chain is Potassium/proton antiporter CemA, found in Fagus sylvatica (Beechnut).